Here is a 3179-residue protein sequence, read N- to C-terminus: Guanylate cyclase beta (3179 aa).

Topologically, residues Met-1 to Leu-60 are cytoplasmic. A helical transmembrane segment spans residues Ile-61–Ile-81. Over Asn-82 to Lys-88 the chain is Extracellular. A helical transmembrane segment spans residues Tyr-89–Glu-109. Residues Ser-110–Tyr-295 lie on the Cytoplasmic side of the membrane. The chain crosses the membrane as a helical span at residues Tyr-296–Phe-316. Residues His-317–Ser-328 lie on the Extracellular side of the membrane. A helical transmembrane segment spans residues Phe-329 to Tyr-349. Residues Ser-350–Lys-988 are Cytoplasmic-facing. Residues Val-989–Phe-1009 traverse the membrane as a helical segment. Topologically, residues Asp-1010–Ser-1020 are extracellular. The chain crosses the membrane as a helical span at residues Ile-1021–Ala-1041. The Cytoplasmic segment spans residues Tyr-1042–Asn-1069. A helical membrane pass occupies residues Asn-1070–Leu-1090. The Extracellular segment spans residues Arg-1091–Glu-1102. The chain crosses the membrane as a helical span at residues Phe-1103–Ser-1123. The Cytoplasmic portion of the chain corresponds to Lys-1124 to His-1127. The helical transmembrane segment at Ile-1128–Phe-1148 threads the bilayer. The Extracellular portion of the chain corresponds to Thr-1149–Asn-1168. Residues Ile-1169–Met-1189 traverse the membrane as a helical segment. Topologically, residues Lys-1190–Arg-1304 are cytoplasmic. Residues Ile-1305–Asp-1325 form a helical membrane-spanning segment. Topologically, residues Ile-1326–Asn-1331 are extracellular. Residues Ile-1332–Tyr-1352 traverse the membrane as a helical segment. Over Ile-1353–Thr-1360 the chain is Cytoplasmic. A helical membrane pass occupies residues Ser-1361–Tyr-1381. Residues Asp-1382–Tyr-1401 lie on the Extracellular side of the membrane. The N-linked (GlcNAc...) asparagine glycan is linked to Asn-1383. The chain crosses the membrane as a helical span at residues Ile-1402–Leu-1422. The Cytoplasmic portion of the chain corresponds to Thr-1423 to Gln-1464. A helical membrane pass occupies residues Ile-1465 to Tyr-1485. The Extracellular portion of the chain corresponds to Glu-1486 to Gln-1507. The helical transmembrane segment at Ile-1508–Pro-1528 threads the bilayer. The Cytoplasmic portion of the chain corresponds to Lys-1529 to Leu-2739. One can recognise a Guanylate cyclase 1 domain in the interval Ser-1548 to Lys-1700. Disordered regions lie at residues Leu-2123–Ser-2153, Ser-2355–Lys-2379, and Lys-2576–Ser-2656. Over residues Asn-2131–Val-2142 the composition is skewed to basic residues. The segment covering Asn-2584–Ile-2607 has biased composition (low complexity). The span at His-2614–His-2645 shows a compositional bias: basic residues. The helical transmembrane segment at Ile-2740–Phe-2760 threads the bilayer. At Tyr-2761 to Ser-2770 the chain is on the extracellular side. Asn-2768 carries N-linked (GlcNAc...) asparagine glycosylation. Residues Ile-2771–Ile-2791 traverse the membrane as a helical segment. The Cytoplasmic segment spans residues Leu-2792–Thr-2809. Residues Ile-2810–Ile-2830 traverse the membrane as a helical segment. Residues His-2831–Arg-2842 lie on the Extracellular side of the membrane. A helical membrane pass occupies residues Ala-2843–Lys-2863. At Asn-2864–Lys-2870 the chain is on the cytoplasmic side. Residues Phe-2871–Ile-2891 form a helical membrane-spanning segment. The Extracellular segment spans residues His-2892–Gln-2895. Residues Thr-2896 to Ser-2916 traverse the membrane as a helical segment. Residues Glu-2917–Ser-3179 lie on the Cytoplasmic side of the membrane. One can recognise a Guanylate cyclase 2 domain in the interval Ala-2968–Glu-3102. Mg(2+)-binding residues include Asp-2973, Ile-2974, and Asp-3017.

This sequence in the N-terminal section; belongs to the cation transport ATPase (P-type) (TC 3.A.3) family. Type IV subfamily. In the C-terminal section; belongs to the adenylyl cyclase class-4/guanylyl cyclase family. Mg(2+) is required as a cofactor. The cofactor is Mn(2+).

It localises to the membrane. It carries out the reaction GTP = 3',5'-cyclic GMP + diphosphate. Its activity is regulated as follows. Basal guanylate activity of the recombinant guanylate cyclase domains 1 and 2 is not modulated by an increase in Ca(2+) levels or by the gametogenesis inducer xanthurenic acid. Catalyzes the synthesis of the second messenger cGMP from GTP. Regulates cGMP production in gametocytes; however, is dispensable for the initiation of gametogenesis. Does not have adenylate cyclase activity. This chain is Guanylate cyclase beta, found in Plasmodium falciparum (isolate 3D7).